Here is a 97-residue protein sequence, read N- to C-terminus: Citrate lyase acyl carrier protein (97 aa).

Residue S14 is modified to O-(phosphoribosyl dephospho-coenzyme A)serine.

Belongs to the CitD family. As to quaternary structure, oligomer with a subunit composition of (alpha,beta,gamma)6.

The protein localises to the cytoplasm. Its function is as follows. Covalent carrier of the coenzyme of citrate lyase. The sequence is that of Citrate lyase acyl carrier protein from Lactobacillus helveticus (strain DPC 4571).